The chain runs to 239 residues: Phosphothreonine lyase OspF (239 aa).

The active-site Proton donor is the H104. The Proton acceptor role is filled by K134.

The protein belongs to the phosphothreonine lyase family.

Its subcellular location is the secreted. Its function is as follows. Catalyzes the removal of the phosphate group from the phosphothreonine in the mitogen-activated protein kinases such as MAPK2/ERK2, MAPK3/ERK1, MAPK8 and MAPK14 in an irreversible reaction, thus preventing the downstream phosphorylation of histone H3. This epigenetic modification results in inhibition of the transcription of a specific subset of pro-inflammatory genes, and ultimately to a reduced immune response against the invading pathogen. The diminished immune response enhances the bacterium's ability to disseminate and multiply within the host. The protein is Phosphothreonine lyase OspF (ospF) of Shigella sonnei (strain Ss046).